Consider the following 437-residue polypeptide: GTPase Obg (437 aa).

The Obg domain maps to 2 to 160 (SMFLDTAKIS…RQLELELKIL (159 aa)). An OBG-type G domain is found at 161-338 (ADVGLVGFPS…LLEATAELLA (178 aa)). GTP contacts are provided by residues 167 to 174 (GFPSVGKS), 192 to 196 (FTTIV), 214 to 217 (DLPG), 284 to 287 (NKMD), and 319 to 321 (SSL). Positions 174 and 194 each coordinate Mg(2+). In terms of domain architecture, OCT spans 359-437 (GFAETEKDFE…IGKFEFEFVD (79 aa)).

This sequence belongs to the TRAFAC class OBG-HflX-like GTPase superfamily. OBG GTPase family. As to quaternary structure, monomer. Requires Mg(2+) as cofactor.

It localises to the cytoplasm. Functionally, an essential GTPase which binds GTP, GDP and possibly (p)ppGpp with moderate affinity, with high nucleotide exchange rates and a fairly low GTP hydrolysis rate. Plays a role in control of the cell cycle, stress response, ribosome biogenesis and in those bacteria that undergo differentiation, in morphogenesis control. The sequence is that of GTPase Obg from Streptococcus pyogenes serotype M5 (strain Manfredo).